The following is a 355-amino-acid chain: Histidinol-phosphate aminotransferase (355 aa).

Lys-218 bears the N6-(pyridoxal phosphate)lysine mark.

This sequence belongs to the class-II pyridoxal-phosphate-dependent aminotransferase family. Histidinol-phosphate aminotransferase subfamily. In terms of assembly, homodimer. It depends on pyridoxal 5'-phosphate as a cofactor.

The catalysed reaction is L-histidinol phosphate + 2-oxoglutarate = 3-(imidazol-4-yl)-2-oxopropyl phosphate + L-glutamate. It participates in amino-acid biosynthesis; L-histidine biosynthesis; L-histidine from 5-phospho-alpha-D-ribose 1-diphosphate: step 7/9. This chain is Histidinol-phosphate aminotransferase, found in Chlorobium limicola (strain DSM 245 / NBRC 103803 / 6330).